A 198-amino-acid chain; its full sequence is N-acetyltransferase 9-like protein (198 aa).

In terms of domain architecture, N-acetyltransferase spans 14 to 186 (IILVPYKEKH…SNNFTNLTAD (173 aa)).

Belongs to the acetyltransferase family. GNAT subfamily.

The protein is N-acetyltransferase 9-like protein (nat9) of Nematostella vectensis (Starlet sea anemone).